The chain runs to 227 residues: Transmembrane emp24 domain-containing protein 1 (227 aa).

The signal sequence occupies residues 1–23 (MMAAGAALALALWLLMPPVGVGG). At 24 to 194 (AGPPPIQDGE…LQEGNLERVN (171 aa)) the chain is on the extracellular side. One can recognise a GOLD domain in the interval 43 to 125 (KQCFYQSAPA…EKLVFFELIF (83 aa)). Residues 145-170 (EMLDVKMEDIKESIETMRTRLERSIQ) are a coiled coil. The chain crosses the membrane as a helical span at residues 195 to 215 (FWSAVNVAVLLLVAVLQVCTL). Over 216-227 (KRFFQDKRPVPT) the chain is Cytoplasmic. Positions 218-219 (FF) match the COPII vesicle coat-binding motif. The short motif at 218 to 227 (FFQDKRPVPT) is the COPI vesicle coat-binding element.

Belongs to the EMP24/GP25L family. Homodimer in endoplasmic reticulum, endoplasmic reticulum-Golgi intermediate compartment and cis-Golgi network. Interacts with IL1RL1. Interacts with RNF26; this interaction is important to modulate innate immune signaling through the cGAS-STING pathway.

Its subcellular location is the cell membrane. The protein localises to the endoplasmic reticulum membrane. The protein resides in the golgi apparatus. It is found in the cis-Golgi network membrane. It localises to the endoplasmic reticulum-Golgi intermediate compartment membrane. Potential role in vesicular protein trafficking, mainly in the early secretory pathway. May act as a cargo receptor at the lumenal side for incorporation of secretory cargo molecules into transport vesicles and may be involved in vesicle coat formation at the cytoplasmic side. Plays a positive role in IL-33-mediated IL-8 and IL-6 production by interacting with interleukin-33 receptor IL1RL1. Plays also a role in the modulation of innate immune signaling through the cGAS-STING pathway by interacting with RNF26. This Pongo abelii (Sumatran orangutan) protein is Transmembrane emp24 domain-containing protein 1 (TMED1).